We begin with the raw amino-acid sequence, 88 residues long: ATP synthase subunit c (88 aa).

A run of 2 helical transmembrane segments spans residues 10-30 (ILAASAIGAGLAMIAGLGPGI) and 68-88 (GIYSLVIALILLFANPLIRLL).

This sequence belongs to the ATPase C chain family. As to quaternary structure, F-type ATPases have 2 components, F(1) - the catalytic core - and F(0) - the membrane proton channel. F(1) has five subunits: alpha(3), beta(3), gamma(1), delta(1), epsilon(1). F(0) has three main subunits: a(1), b(2) and c(10-14). The alpha and beta chains form an alternating ring which encloses part of the gamma chain. F(1) is attached to F(0) by a central stalk formed by the gamma and epsilon chains, while a peripheral stalk is formed by the delta and b chains.

The protein localises to the cell membrane. Functionally, f(1)F(0) ATP synthase produces ATP from ADP in the presence of a proton or sodium gradient. F-type ATPases consist of two structural domains, F(1) containing the extramembraneous catalytic core and F(0) containing the membrane proton channel, linked together by a central stalk and a peripheral stalk. During catalysis, ATP synthesis in the catalytic domain of F(1) is coupled via a rotary mechanism of the central stalk subunits to proton translocation. Key component of the F(0) channel; it plays a direct role in translocation across the membrane. A homomeric c-ring of between 10-14 subunits forms the central stalk rotor element with the F(1) delta and epsilon subunits. This is ATP synthase subunit c from Alkaliphilus oremlandii (strain OhILAs) (Clostridium oremlandii (strain OhILAs)).